The sequence spans 382 residues: Ubiquitin-like protease 4 (382 aa).

The segment at 46 to 106 is disordered; that stretch reads GTHLDGSIGE…DNDEWTNQKR (61 aa). Over residues 84–100 the composition is skewed to acidic residues; it reads DLVDEDEEEEDEEDNDE.

It belongs to the peptidase C48 family. Expressed in hermaphrodite-specific neurons, head muscles, body wall muscles and pharyngeal cells.

It is found in the cytoplasm. It localises to the cytoskeleton. Its subcellular location is the microtubule organizing center. The protein resides in the centrosome. The protein localises to the nucleus. It is found in the mitochondrion matrix. It participates in protein modification; protein sumoylation. In terms of biological role, protease required for deconjugation of smo-1 conjugates from target proteins which is necessary for cell cycle progression. Required for respiration and the maintenance of normal mitochondrial homeostasis. In response to mitochondrial stress, required for the removal of smo-1 conjugates from the transcription factor dve-1, which promotes the translocation of dve-1 from the cytosol to the nucleus to initiate the mitochondrial unfolded protein response. Furthermore, removes the smo-1 conjugates from the transcription factor atfs-1 to promote its stability and activate the mitochondrial unfolded protein response. Also plays a role in promoting mitochondrial unfolded protein response-mediated innate immunity following infection with P.aeruginosa. This chain is Ubiquitin-like protease 4, found in Caenorhabditis elegans.